The chain runs to 200 residues: Phospholipase A2 inhibitor 1 (200 aa).

An N-terminal signal peptide occupies residues 1-19 (MKSLHIICLLFIFVARGNS). Intrachain disulfides connect cysteine 22/cysteine 46, cysteine 25/cysteine 32, cysteine 39/cysteine 67, cysteine 73/cysteine 94, cysteine 95/cysteine 100, cysteine 118/cysteine 143, cysteine 136/cysteine 165, and cysteine 169/cysteine 191. N-linked (GlcNAc...) asparagine glycosylation occurs at asparagine 176.

Belongs to the CNF-like-inhibitor family. In terms of assembly, occurs as a mixture of oligomers. Tetrameric arrangement appears to be the predominant quaternary structure. Post-translationally, N-glycosylated. As to expression, expressed by the liver.

It is found in the secreted. Its function is as follows. Inhibits basic phospholipase A2 isozymes PLA-B, BP-I and BP-II. The chain is Phospholipase A2 inhibitor 1 from Protobothrops flavoviridis (Habu).